The primary structure comprises 241 residues: MSYRIDFEGSSEIGAYMSLTNTYCVIGRSQSNNVLKFLQENVAIPIVETTINSIRSVGSQCRGNRHGLLVPHTITDQEIMHIRNSLPEDVVVRRIEERLNALGNVILCNDHIAIIHGDLDKESEDLIRDVLQVHVYRQNIGQEPLVGTFGALNNQGMLVHPFTSTECQKELSELLEVNVVAGTINGGSQCVGGGVVANDWMCIAGIKTTNVEMAVIEGVFDLTGDQDLEARRRAIVDAIVR.

It belongs to the eIF-6 family. In terms of assembly, monomer. Associates with the 60S ribosomal subunit.

The protein resides in the cytoplasm. It localises to the nucleus. Its subcellular location is the nucleolus. Functionally, binds to the 60S ribosomal subunit and prevents its association with the 40S ribosomal subunit to form the 80S initiation complex in the cytoplasm. Is also involved in ribosome biogenesis. Associates with pre-60S subunits in the nucleus and is involved in its nuclear export. The polypeptide is Eukaryotic translation initiation factor 6 (Encephalitozoon cuniculi (strain GB-M1) (Microsporidian parasite)).